Here is a 440-residue protein sequence, read N- to C-terminus: tRNA-2-methylthio-N(6)-dimethylallyladenosine synthase (440 aa).

Residues 5–121 enclose the MTTase N-terminal domain; sequence KKLYIKTYGC…LPEMEAKAGT (117 aa). [4Fe-4S] cluster-binding residues include Cys14, Cys50, Cys84, Cys159, Cys163, and Cys166. Residues 145-378 form the Radical SAM core domain; sequence AKRGPTAFLT…LTRQQREVQD (234 aa). The region spanning 378 to 440 is the TRAM domain; sequence DSMVGRELGV…ANSLAGELID (63 aa).

Belongs to the methylthiotransferase family. MiaB subfamily. As to quaternary structure, monomer. It depends on [4Fe-4S] cluster as a cofactor.

Its subcellular location is the cytoplasm. The enzyme catalyses N(6)-dimethylallyladenosine(37) in tRNA + (sulfur carrier)-SH + AH2 + 2 S-adenosyl-L-methionine = 2-methylsulfanyl-N(6)-dimethylallyladenosine(37) in tRNA + (sulfur carrier)-H + 5'-deoxyadenosine + L-methionine + A + S-adenosyl-L-homocysteine + 2 H(+). Catalyzes the methylthiolation of N6-(dimethylallyl)adenosine (i(6)A), leading to the formation of 2-methylthio-N6-(dimethylallyl)adenosine (ms(2)i(6)A) at position 37 in tRNAs that read codons beginning with uridine. The chain is tRNA-2-methylthio-N(6)-dimethylallyladenosine synthase from Ruegeria sp. (strain TM1040) (Silicibacter sp.).